The following is a 172-amino-acid chain: EPIDERMAL PATTERNING FACTOR-like protein 7 (172 aa).

The N-terminal stretch at 1-27 (MDHVNPTLFHLKSLSIFTLTLLYISSP) is a signal peptide. Intrachain disulfides connect Cys128–Cys159, Cys132–Cys138, Cys135–Cys161, and Cys147–Cys153.

Belongs to the plant cysteine rich small secretory peptide family. Epidermal patterning factor subfamily.

It localises to the secreted. Functionally, controls stomatal patterning. The sequence is that of EPIDERMAL PATTERNING FACTOR-like protein 7 from Arabidopsis thaliana (Mouse-ear cress).